Consider the following 398-residue polypeptide: Bone morphogenetic protein 2-B (398 aa).

Positions 1–23 (MVAGIHSLLLLQFYQILLSGCTG) are cleaved as a signal peptide. A propeptide spanning residues 24-284 (LVPEEGKRKY…GHALHKRQKR (261 aa)) is cleaved from the precursor. N-linked (GlcNAc...) asparagine glycosylation is found at N137, N202, N237, and N340. 3 cysteine pairs are disulfide-bonded: C298/C363, C327/C395, and C331/C397.

Belongs to the TGF-beta family. As to quaternary structure, homodimer; disulfide-linked.

The protein resides in the secreted. In terms of biological role, induces cartilage and bone formation. The protein is Bone morphogenetic protein 2-B (bmp2-b) of Xenopus laevis (African clawed frog).